The following is a 163-amino-acid chain: MRRILSVLLENESGALSRVVGLFSQRAFNIESLTVAPTDDPTLSRMTIEAVGDAQALEQIEKQLHKLVDVFKVVNLSEQEHIEREIVLAKVRAVGSSRDEIKRLADIFRGQIVDVTPKSYTIQLSGTNDKVDAFISALKEETTLLEIVRSGLISVSRGEKNIL.

An ACT domain is found at 4-79 (ILSVLLENES…VFKVVNLSEQ (76 aa)).

Belongs to the acetolactate synthase small subunit family. Dimer of large and small chains.

It catalyses the reaction 2 pyruvate + H(+) = (2S)-2-acetolactate + CO2. The protein operates within amino-acid biosynthesis; L-isoleucine biosynthesis; L-isoleucine from 2-oxobutanoate: step 1/4. It functions in the pathway amino-acid biosynthesis; L-valine biosynthesis; L-valine from pyruvate: step 1/4. In Haemophilus influenzae (strain ATCC 51907 / DSM 11121 / KW20 / Rd), this protein is Acetolactate synthase small subunit (ilvH).